We begin with the raw amino-acid sequence, 431 residues long: Phosphoribosylamine--glycine ligase (431 aa).

Residues 109 to 316 (KDFLARHGIP…LVDLLEAAID (208 aa)) enclose the ATP-grasp domain. Residue 135-196 (VREKGTPIVV…EEFLDGEEAS (62 aa)) coordinates ATP. Residues E286 and N288 each contribute to the Mg(2+) site.

The protein belongs to the GARS family. Requires Mg(2+) as cofactor. It depends on Mn(2+) as a cofactor.

The catalysed reaction is 5-phospho-beta-D-ribosylamine + glycine + ATP = N(1)-(5-phospho-beta-D-ribosyl)glycinamide + ADP + phosphate + H(+). It participates in purine metabolism; IMP biosynthesis via de novo pathway; N(1)-(5-phospho-D-ribosyl)glycinamide from 5-phospho-alpha-D-ribose 1-diphosphate: step 2/2. The polypeptide is Phosphoribosylamine--glycine ligase (Xanthomonas axonopodis pv. citri (strain 306)).